A 1217-amino-acid polypeptide reads, in one-letter code: ATP-dependent helicase/nuclease subunit A (1217 aa).

A UvrD-like helicase ATP-binding domain is found at 10-475; the sequence is VIWTDAQWQS…IDLSQNFRSR (466 aa). Residue 31–38 coordinates ATP; it reads AAAGSGKT. The UvrD-like helicase C-terminal domain maps to 476–786; that stretch reads KEVLSTTNYI…RMMTIHSSKG (311 aa).

It belongs to the helicase family. AddA subfamily. As to quaternary structure, heterodimer of AddA and AddB/RexB. Mg(2+) serves as cofactor.

It catalyses the reaction Couples ATP hydrolysis with the unwinding of duplex DNA by translocating in the 3'-5' direction.. It carries out the reaction ATP + H2O = ADP + phosphate + H(+). In terms of biological role, the heterodimer acts as both an ATP-dependent DNA helicase and an ATP-dependent, dual-direction single-stranded exonuclease. Recognizes the chi site generating a DNA molecule suitable for the initiation of homologous recombination. The AddA nuclease domain is required for chi fragment generation; this subunit has the helicase and 3' -&gt; 5' nuclease activities. The polypeptide is ATP-dependent helicase/nuclease subunit A (Staphylococcus aureus (strain NCTC 8325 / PS 47)).